A 163-amino-acid chain; its full sequence is Probable calcium-binding protein CML26 (163 aa).

Alanine 2 bears the N-acetylalanine mark. EF-hand domains lie at 16 to 51 (STDMELKKVFDKFDANGDGKISVSELGNVFKSMGTS), 52 to 82 (YTEEELNRVLDEIDIDCDGFINQEEFATICR), 85 to 120 (SSAVEIREAFDLYDQNKNGLISSSEIHKVLNRLGMT), and 121 to 156 (CSVEDCVRMIGHVDTDGDGNVNFEEFQKMMSSPELV). Positions 29, 31, 33, 35, 40, 65, 67, 69, 76, 98, 100, 102, 109, 134, 136, 138, 140, and 145 each coordinate Ca(2+).

Potential calcium sensor. The polypeptide is Probable calcium-binding protein CML26 (CML26) (Arabidopsis thaliana (Mouse-ear cress)).